Here is a 231-residue protein sequence, read N- to C-terminus: MDFALPTTASQASAFMNNSSLTFPVLPNANNEATNETADSGDAEVSKNEGVSGIVPTLQNIVATVNLDCRLDLKTIALHARNAEYNPKRFAAVIMRIREPKSTALIFASGKMVVLGGKSEDDSKLASRKYARIIQKLGFNAKFTDFKIQNIVGSCDVKFPIRLEGLAYSHGTFSSYEPELFPGLIYRMVKPKVVLLIFVSGKIVLTGAKVREEIYQAFEAIYPVLSEFRKH.

Repeat copies occupy residues 58 to 134 and 148 to 225.

Belongs to the TBP family. As to quaternary structure, belongs to the TFIID complex together with the TBP-associated factors (TAFs). Binds DNA as monomer.

It is found in the nucleus. In terms of biological role, general transcription factor that functions at the core of the DNA-binding multiprotein factor TFIID. Binding of TFIID to the TATA box is the initial transcriptional step of the pre-initiation complex (PIC), playing a role in the activation of eukaryotic genes transcribed by RNA polymerase II. In Schizosaccharomyces pombe (strain 972 / ATCC 24843) (Fission yeast), this protein is TATA-box-binding protein (tbp1).